Consider the following 407-residue polypeptide: Phosphopentomutase (407 aa).

Mn(2+)-binding residues include aspartate 10, aspartate 306, histidine 311, aspartate 347, histidine 348, and histidine 359.

The protein belongs to the phosphopentomutase family. The cofactor is Mn(2+).

Its subcellular location is the cytoplasm. It catalyses the reaction 2-deoxy-alpha-D-ribose 1-phosphate = 2-deoxy-D-ribose 5-phosphate. The enzyme catalyses alpha-D-ribose 1-phosphate = D-ribose 5-phosphate. It participates in carbohydrate degradation; 2-deoxy-D-ribose 1-phosphate degradation; D-glyceraldehyde 3-phosphate and acetaldehyde from 2-deoxy-alpha-D-ribose 1-phosphate: step 1/2. Isomerase that catalyzes the conversion of deoxy-ribose 1-phosphate (dRib-1-P) and ribose 1-phosphate (Rib-1-P) to deoxy-ribose 5-phosphate (dRib-5-P) and ribose 5-phosphate (Rib-5-P), respectively. The chain is Phosphopentomutase from Sodalis glossinidius (strain morsitans).